The following is a 344-amino-acid chain: Trace amine-associated receptor 8c (344 aa).

At 1–36 (MTSNFSQATLQLCYENVNASCIKTPYSPGLRVLLYM) the chain is on the extracellular side. Asn4 and Asn18 each carry an N-linked (GlcNAc...) asparagine glycan. Cystine bridges form between Cys21/Cys185 and Cys96/Cys189. Residues 37-57 (VFGFGAVLAVCGNLLVVISVL) traverse the membrane as a helical segment. The Cytoplasmic portion of the chain corresponds to 58–67 (HFKQLHSPAN). Residues 68 to 88 (FLIASLASADFLVGISVMPFS) form a helical membrane-spanning segment. Residues 89–102 (MVRSIESCWYFGDT) lie on the Extracellular side of the membrane. The chain crosses the membrane as a helical span at residues 103 to 127 (FCSLHSCCDVAFCYSSALHLCFISV). The Cytoplasmic segment spans residues 128–146 (DRYIAVTDPLVYPTKFTVS). Residues 147 to 167 (VSGICISISWILPLVYSSAVF) form a helical membrane-spanning segment. Topologically, residues 168-196 (YTGISAMGIENLVSALNCVGGCQVVVNQD) are extracellular. The helical transmembrane segment at 197–217 (WVLISFLLFFIPTLVMIILYS) threads the bilayer. Residues 218 to 260 (KIFLVAKQQAVKIETSVSGSKGESSLESHKARVAKRERKAAKT) are Cytoplasmic-facing. A helical membrane pass occupies residues 261–281 (LGVTVLAFIVSWLPYTIDTLI). At 282-295 (DAFMGFITPAYVYE) the chain is on the extracellular side. The chain crosses the membrane as a helical span at residues 296–319 (FCCWSAYYNSAMNPLIYAFFYPWF). The Cytoplasmic portion of the chain corresponds to 320-344 (RKAMKLILSGKILKGHSSTTSLFSE).

Belongs to the G-protein coupled receptor 1 family.

The protein localises to the cell membrane. Olfactory receptor activated by trace amines, such as N-methylpiperidine and N,N-dimethylcyclohexylamine. Trace amine compounds are enriched in animal body fluids and act on trace amine-associated receptors (TAARs) to elicit both intraspecific and interspecific innate behaviors. Ligand-binding causes a conformation change that triggers signaling via G(s)-class of G alpha proteins (GNAL or GNAS). The polypeptide is Trace amine-associated receptor 8c (Rattus norvegicus (Rat)).